We begin with the raw amino-acid sequence, 107 residues long: MQFSTTPTLEGQTIVEYCGVVTGEAILGANIFRDFFAGIRDIVGGRSGAYEKELRKAREIAFEELGDQARALGADAVVGIDIDYETVGQNGSMLMVSVSGTAVKTRR.

It belongs to the UPF0145 family.

This is UPF0145 protein YbjQ from Escherichia coli (strain SMS-3-5 / SECEC).